The chain runs to 465 residues: Cysteine--tRNA ligase (465 aa).

Cys30 provides a ligand contact to Zn(2+). The 'HIGH' region motif lies at 32–42 (ITVYDYCHVGH). Zn(2+) is bound by residues Cys214, His239, and Glu243. A 'KMSKS' region motif is present at residues 271-275 (KMSKS). Lys274 lines the ATP pocket.

The protein belongs to the class-I aminoacyl-tRNA synthetase family. Monomer. The cofactor is Zn(2+).

It localises to the cytoplasm. The catalysed reaction is tRNA(Cys) + L-cysteine + ATP = L-cysteinyl-tRNA(Cys) + AMP + diphosphate. The polypeptide is Cysteine--tRNA ligase (Burkholderia ambifaria (strain ATCC BAA-244 / DSM 16087 / CCUG 44356 / LMG 19182 / AMMD) (Burkholderia cepacia (strain AMMD))).